The chain runs to 344 residues: MAKLVLKGNNLSKLIKMSVHREKIDLAKLPHHYDGPVTLAVIGGTGLYDLPNLHPVARLTISTSWGFPSGSITISKTDSGFPVAFLARHGAHHDLLPSDVPSRANIAALKKLGVKAIIAFSAVGSLQQEIKPRDFVLPTQIIDRTKGIRPSTFFEKGFVAHAMFGEPFDLKLNKLISDAIPSKGFLEGFDTDGTPVLHTKENTNNGEDLTIICMEGPQFSTRAESRLYRSWGGSVINMSVLPEAKLAREAEIAYQMICMSTDYDSWNESEEPVTVETVVGNLKANSANACKLAAKLIDEFAAKGGEIGKDLQGSMKYAVSTSPHGVKKELLEKMHFLFPGYWEV.

Phosphate is bound by residues threonine 45, 88–89, and 121–122; these read RH and SA. Position 238 (methionine 238) interacts with substrate. Serine 239 contributes to the phosphate binding site. 262 to 264 serves as a coordination point for substrate; the sequence is DYD.

This sequence belongs to the PNP/MTAP phosphorylase family. MTAP subfamily. Homotrimer.

The protein resides in the cytoplasm. It is found in the nucleus. It carries out the reaction S-methyl-5'-thioadenosine + phosphate = 5-(methylsulfanyl)-alpha-D-ribose 1-phosphate + adenine. It functions in the pathway amino-acid biosynthesis; L-methionine biosynthesis via salvage pathway; S-methyl-5-thio-alpha-D-ribose 1-phosphate from S-methyl-5'-thioadenosine (phosphorylase route): step 1/1. Functionally, catalyzes the reversible phosphorylation of S-methyl-5'-thioadenosine (MTA) to adenine and 5-methylthioribose-1-phosphate. Involved in the breakdown of MTA, a major by-product of polyamine biosynthesis. Responsible for the first step in the methionine salvage pathway after MTA has been generated from S-adenosylmethionine. Has broad substrate specificity with 6-aminopurine nucleosides as preferred substrates. This chain is S-methyl-5'-thioadenosine phosphorylase, found in Candida albicans (strain WO-1) (Yeast).